We begin with the raw amino-acid sequence, 572 residues long: Phosphoglucomutase-1 (572 aa).

Substrate contacts are provided by residues T23, R27, 126-127, and K140; that span reads SH. S126 serves as the catalytic Phosphoserine intermediate. S126 contributes to the Mg(2+) binding site. The Mg(2+) site is built by D308, D310, and D312. Residues 312 to 313, T373, 392 to 394, K405, and R527 each bind substrate; these read DR and EES.

It belongs to the phosphohexose mutase family. Mg(2+) serves as cofactor. Post-translationally, phosphorylated via a calcium-dependent protein kinase. Very rapidly (within 80 ms) dephosphorylated during triggered trichocyst exocytosis. In terms of processing, O-glycosylated with a short chain of mannose residues.

It is found in the cytoplasm. It catalyses the reaction alpha-D-glucose 1-phosphate = alpha-D-glucose 6-phosphate. In terms of biological role, may be involved in membrane fusion in exocytosis. The sequence is that of Phosphoglucomutase-1 (pp63-1) from Paramecium tetraurelia.